The sequence spans 153 residues: Large ribosomal subunit protein bL9 (153 aa).

The protein belongs to the bacterial ribosomal protein bL9 family.

Binds to the 23S rRNA. This Gloeobacter violaceus (strain ATCC 29082 / PCC 7421) protein is Large ribosomal subunit protein bL9.